The following is a 154-amino-acid chain: Cold shock domain-containing protein C2 (154 aa).

Disordered stretches follow at residues 1-22 and 36-62; these read MTSE…SPVW and ERGG…SATA. Serine 19 carries the post-translational modification Phosphoserine. Residues 69 to 136 enclose the CSD domain; sequence VFKGVCKQFS…KFQAVEVVLT (68 aa).

In terms of tissue distribution, brain-specific. Expression restricted to the pyramidal neurons of the cerebral cortex and in the Purkinje cells of the cerebellum.

It is found in the nucleus. It localises to the cytoplasm. RNA-binding factor which binds specifically to the very 3'-UTR ends of both histone H1 and H3.3 mRNAs, encompassing the polyadenylation signal. Might play a central role in the negative regulation of histone variant synthesis in the developing brain. The polypeptide is Cold shock domain-containing protein C2 (Csdc2) (Rattus norvegicus (Rat)).